Consider the following 691-residue polypeptide: WD repeat-containing protein 48 homolog (691 aa).

WD repeat units follow at residues 27–82 (LHRS…PVQY), 88–130 (RHTD…YLDS), 133–168 (LHTDYVSCLAYAPLAEKVVSASFDRNIFVYDVNSNF), 180–219 (GCKNSIYSLATTPNLSHCLFFSPHQQIRMFDPRTNDKPMK), 222–261 (GHSDNVRALLLNDDGTRALSAGSDGTIRLWDIGMQKNIAT), 264–303 (AHEEGVWTIQVDASFKFVYSGGRDRYVLKSPVNDLSKFQV), 306–347 (KEEA…QNSN), and 399–438 (SGAPAINKYKILNDKRHVLTSDTEDNVALYDVLAGKKVKE).

This sequence belongs to the WD repeat WDR48 family. In terms of assembly, interacts with usp-46; the interaction increases the catalytic activity of usp-46 in the presence of wdr-20.

In terms of biological role, together with wdr-20, binds to and stimulates the activity of the deubiquitinating enzyme usp-46, leading to deubiquitination and stabilization of the glr-1 glutamate receptor. The sequence is that of WD repeat-containing protein 48 homolog (wdr-48) from Caenorhabditis briggsae.